The chain runs to 177 residues: Large ribosomal subunit protein uL6 (177 aa).

This sequence belongs to the universal ribosomal protein uL6 family. As to quaternary structure, part of the 50S ribosomal subunit.

Functionally, this protein binds to the 23S rRNA, and is important in its secondary structure. It is located near the subunit interface in the base of the L7/L12 stalk, and near the tRNA binding site of the peptidyltransferase center. The sequence is that of Large ribosomal subunit protein uL6 from Methanocella arvoryzae (strain DSM 22066 / NBRC 105507 / MRE50).